Here is a 455-residue protein sequence, read N- to C-terminus: MARPIVAIIGRPNVGKSTLVNRLCRSREAIVDDKPGVTRDRTYQDGFWGDREFKVVDTGGLVFDDDSEFLPEIREQANLALAEASVALVIVDGQQGVTAADESIAEWLRTQPCPTLVAVNKCESPDQGLAMAAEFWRLGLGEPFPISAIHGAGTGDLLDRVLSLLPPKHEEPEEDEPIQMAIIGRPNVGKSSLLNAICGEPRAIVSPIRGTTRDTIDTRLEREGHPWRLIDTAGIRRRRSVNYGPEFFGINRSFKAIERSDVCVLVIDALDGVTEQDQRLAGRIEDDGRACVLVVNKWDAVEKDSHTMPMVEKELRAKLYFLDWATMLFTSALTGQRVESIFALASLAVEQHRRRVSTSVVNEVLKEALSWRSPPTSRGGRQGRLYYGTQVASRPPSFTLFVNDPKLFGDTYRRYVERQLREGLGFDGTPLKLFWRGKQQRAAERELARQQNRLG.

EngA-type G domains are found at residues 4–169 (PIVA…PPKH) and 178–353 (IQMA…EQHR). Residues 10 to 17 (GRPNVGKS), 57 to 61 (DTGGL), 120 to 123 (NKCE), 184 to 191 (GRPNVGKS), 231 to 235 (DTAGI), and 296 to 299 (NKWD) each bind GTP. A KH-like domain is found at 354 to 439 (RRVSTSVVNE…PLKLFWRGKQ (86 aa)).

It belongs to the TRAFAC class TrmE-Era-EngA-EngB-Septin-like GTPase superfamily. EngA (Der) GTPase family. Associates with the 50S ribosomal subunit.

GTPase that plays an essential role in the late steps of ribosome biogenesis. This is GTPase Der from Prochlorococcus marinus (strain MIT 9313).